The chain runs to 390 residues: Stearoyl-[acyl-carrier-protein] 9-desaturase 5, chloroplastic (390 aa).

The tract at residues 1–22 (MAFAASHTASPSSCGGVAQRRS) is disordered. The transit peptide at 1-31 (MAFAASHTASPSSCGGVAQRRSNGMSPVVAM) directs the protein to the chloroplast. Glutamate 132, glutamate 170, histidine 173, glutamate 223, glutamate 256, and histidine 259 together coordinate Fe cation.

It belongs to the fatty acid desaturase type 2 family. As to quaternary structure, homodimer. Fe(2+) is required as a cofactor.

Its subcellular location is the plastid. It is found in the chloroplast. The enzyme catalyses octadecanoyl-[ACP] + 2 reduced [2Fe-2S]-[ferredoxin] + O2 + 2 H(+) = (9Z)-octadecenoyl-[ACP] + 2 oxidized [2Fe-2S]-[ferredoxin] + 2 H2O. It functions in the pathway lipid metabolism; fatty acid metabolism. Converts stearoyl-ACP to oleoyl-ACP by introduction of a cis double bond between carbons 9 and 10 of the acyl chain. This chain is Stearoyl-[acyl-carrier-protein] 9-desaturase 5, chloroplastic, found in Oryza sativa subsp. japonica (Rice).